The sequence spans 705 residues: Catalase C (705 aa).

Positions 1 to 31 (MAKKPSAPNNTKPATIHDQKATRGNGGELHQ) are disordered. Catalysis depends on residues His-88 and Asn-161. Residue Tyr-375 coordinates heme.

Belongs to the catalase family. HPII subfamily. Requires heme as cofactor.

The catalysed reaction is 2 H2O2 = O2 + 2 H2O. Decomposes hydrogen peroxide into water and oxygen; serves to protect cells from the toxic effects of hydrogen peroxide. Could protect cells in nodules which have a high potential to produce hydrogen peroxide because of the strong reducing conditions required for nitrogen fixation and the action of several proteins. In Rhizobium meliloti (strain 1021) (Ensifer meliloti), this protein is Catalase C (katE).